The sequence spans 186 residues: Large ribosomal subunit protein uL6 (186 aa).

It belongs to the universal ribosomal protein uL6 family. In terms of assembly, part of the 50S ribosomal subunit.

This protein binds to the 23S rRNA, and is important in its secondary structure. It is located near the subunit interface in the base of the L7/L12 stalk, and near the tRNA binding site of the peptidyltransferase center. This Hyperthermus butylicus (strain DSM 5456 / JCM 9403 / PLM1-5) protein is Large ribosomal subunit protein uL6.